Here is a 211-residue protein sequence, read N- to C-terminus: Probable nicotinate-nucleotide adenylyltransferase (211 aa).

It belongs to the NadD family.

It catalyses the reaction nicotinate beta-D-ribonucleotide + ATP + H(+) = deamido-NAD(+) + diphosphate. It functions in the pathway cofactor biosynthesis; NAD(+) biosynthesis; deamido-NAD(+) from nicotinate D-ribonucleotide: step 1/1. Functionally, catalyzes the reversible adenylation of nicotinate mononucleotide (NaMN) to nicotinic acid adenine dinucleotide (NaAD). The sequence is that of Probable nicotinate-nucleotide adenylyltransferase from Cellvibrio japonicus (strain Ueda107) (Pseudomonas fluorescens subsp. cellulosa).